Consider the following 309-residue polypeptide: Dicarboxylate carrier UCP2 (309 aa).

Residues 1 to 16 (MVGFKATDVPPTATVK) are Mitochondrial intermembrane-facing. Solcar repeat units follow at residues 11–106 (PTAT…VKQF), 114–203 (AGIG…IKDT), and 212–297 (DDLP…LKRA). Residues 16–63 (KFLGAGTAACIADLITFPLDTAKVRLQIQGESQGLVRTAASAQYRGVL) form an important for interaction with long-chain fatty acids region. The helical transmembrane segment at 17-40 (FLGAGTAACIADLITFPLDTAKVR) threads the bilayer. Residues 41 to 77 (LQIQGESQGLVRTAASAQYRGVLGTILTMVRTEGPRS) are Mitochondrial matrix-facing. Residues 78-103 (LYNGLVAGLQRQMSFASVRIGLYDSV) traverse the membrane as a helical segment. At 104 to 119 (KQFYTKGSEHAGIGSR) the chain is on the mitochondrial intermembrane side. Residues 120 to 145 (LLAGSTTGALAVAVAQPTDVVKVRFQ) traverse the membrane as a helical segment. Topologically, residues 146–173 (AQARAGGGRRYQSTVEAYKTIAREEGIR) are mitochondrial matrix. The helical transmembrane segment at 174–199 (GLWKGTSPNVARNAIVNCAELVTYDL) threads the bilayer. Over 200–217 (IKDTLLKANLMTDDLPCH) the chain is Mitochondrial intermembrane. A helical transmembrane segment spans residues 218-242 (FTSAFGAGFCTTVIASPVDVVKTRY). The Mitochondrial matrix segment spans residues 243-268 (MNSALGQYHSAGHCALTMLRKEGPRA). The helical transmembrane segment at 269-294 (FYKGFMPSFLRLGSWNVVMFVTYEQL) threads the bilayer. The tract at residues 278–285 (LRLGSWNV) is important for interaction with long-chain fatty acids. Over 295 to 309 (KRALMAAYQSREAPF) the chain is Mitochondrial intermembrane.

The protein belongs to the mitochondrial carrier (TC 2.A.29) family. As to quaternary structure, homotetramer. Adopts an asymmetrical dimer of dimers functional form. Interacts with MICU1 (when methylated); leading to decrease the calcium sensitivity of MICU1. Widely expressed. Highest in spleen, lung, white and brown adipose tissues. 4-6 times higher levels are detected in white adipose tissue of ob/ob and db/db mice when compared to lean littermates. Expressed in neurons of the ventromedial nucleus of the hypothalamus (at protein level). Expressed in thymocytes (at protein level).

It localises to the mitochondrion inner membrane. The enzyme catalyses L-aspartate(out) + phosphate(in) + H(+)(in) = L-aspartate(in) + phosphate(out) + H(+)(out). The catalysed reaction is oxaloacetate(out) + phosphate(in) + H(+)(in) = oxaloacetate(in) + phosphate(out) + H(+)(out). It catalyses the reaction (S)-malate(out) + phosphate(in) + H(+)(in) = (S)-malate(in) + phosphate(out) + H(+)(out). It carries out the reaction malonate(out) + phosphate(in) + H(+)(in) = malonate(in) + phosphate(out) + H(+)(out). The enzyme catalyses sulfate(out) + phosphate(in) + H(+)(in) = sulfate(in) + phosphate(out) + H(+)(out). The catalysed reaction is (S)-malate(out) = (S)-malate(in). It catalyses the reaction L-aspartate(out) = L-aspartate(in). It carries out the reaction phosphate(in) = phosphate(out). The enzyme catalyses chloride(in) = chloride(out). The catalysed reaction is H(+)(in) = H(+)(out). It catalyses the reaction a long-chain fatty acid(out) = a long-chain fatty acid(in). Proton conductance is activated by free long-chain fatty acids and allosterically inhibited by purine nucleotides. Could be constitutively inhibited by GDP. In terms of biological role, antiporter that exports dicarboxylate intermediates of the Krebs cycle in exchange for phosphate plus a proton across the inner membrane of mitochondria, a process driven by mitochondrial motive force with an overall impact on glycolysis, glutaminolysis and glutathione-dependent redox balance. Continuous export of oxaloacetate and related four-carbon dicarboxylates from mitochondrial matrix into the cytosol negatively regulates the oxidation of acetyl-CoA substrates via the Krebs cycle lowering the ATP/ADP ratio and reactive oxygen species (ROS) production. May mediate inducible proton entry into the mitochondrial matrix affecting ATP turnover as a protection mechanism against oxidative stress. The proton currents are most likely associated with fatty acid flipping across the inner membrane of mitochondria in a metabolic process regulated by free fatty acids and purine nucleotides. Regulates the use of glucose as a source of energy. Required for glucose-induced DRP1-dependent mitochondrial fission and neuron activation in the ventromedial nucleus of the hypothalamus (VMH). This mitochondrial adaptation mechanism modulates the VMH pool of glucose-excited neurons with an impact on systemic glucose homeostasis. Regulates ROS levels and metabolic reprogramming of macrophages during the resolution phase of inflammation. Attenuates ROS production in response to IL33 to preserve the integrity of the Krebs cycle required for persistent production of itaconate and subsequent GATA3-dependent differentiation of inflammation-resolving alternatively activated macrophages. Can unidirectionally transport anions including L-malate, L-aspartate, phosphate and chloride ions. Does not mediate adaptive thermogenesis. The polypeptide is Dicarboxylate carrier UCP2 (Ucp2) (Mus musculus (Mouse)).